Consider the following 53-residue polypeptide: UPF0391 membrane protein Bmul_5473/BMULJ_06024 (53 aa).

The next 2 membrane-spanning stretches (helical) occupy residues 5-25 and 30-50; these read ALIF…GIAA and IAKI…LLGV.

The protein belongs to the UPF0391 family.

The protein resides in the cell membrane. The protein is UPF0391 membrane protein Bmul_5473/BMULJ_06024 of Burkholderia multivorans (strain ATCC 17616 / 249).